The sequence spans 524 residues: Beta-glucosidase 23 (524 aa).

The signal sequence occupies residues 1 to 24 (MVLQKLPLIGLLLLLTIVASPANA). Position 54 (Gln54) interacts with a beta-D-glucoside. Asn60 carries an N-linked (GlcNAc...) asparagine glycan. A beta-D-glucoside-binding positions include His157 and 202 to 203 (NE). The Proton donor role is filled by Glu203. Cys222 and Cys230 are oxidised to a cystine. Residues Tyr346 and Glu418 each contribute to the a beta-D-glucoside site. The active-site Nucleophile is Glu418. Residue Asn461 is glycosylated (N-linked (GlcNAc...) asparagine). A beta-D-glucoside contacts are provided by residues Trp468, 475–476 (EW), and Phe484. N-linked (GlcNAc...) asparagine glycosylation is present at Asn494. A Prevents secretion from ER motif is present at residues 521–524 (KDEL).

It belongs to the glycosyl hydrolase 1 family. In terms of assembly, homodimers. Binds to the deubiquitinating enzyme AMSH3. The inactive form interacts with PBP1/JAL30 to form the PYK10 complex, at least composed of PYK10/BGLU23, BGLU21, BGLU22, JAL22, JAL23, PBP1/JAL30, PBP2/JAL31, JAL32, JAL33, JAL34, JAL35, GLL22 and GLL23. In terms of processing, forms interchain disulfide bonds. In terms of tissue distribution, expressed exclusively in roots.

The protein localises to the endoplasmic reticulum lumen. It catalyses the reaction Hydrolysis of terminal, non-reducing beta-D-glucosyl residues with release of beta-D-glucose.. Its activity is regulated as follows. Activated by tissue damage and upon binding to PBP1 or PBP2. Its function is as follows. Beta-D-glucosidase active on scopolin &gt; esculin &gt;&gt; 4-MU-glucoside &gt;&gt; DIMBOA-glucoside. No activity with pNP-glucoside, oNP-glucoside and sinigrin as substrates. May possess beta-D-fucosidase activity. Required for the beneficial interaction with the endophytic fungus P.indica. May participate in the control of root colonization by P.indica by repressing defense responses and modulating other responses required for a mutualistic interaction. The protein is Beta-glucosidase 23 of Arabidopsis thaliana (Mouse-ear cress).